Here is a 113-residue protein sequence, read N- to C-terminus: MEIIMIFVSGILTAISVYLVLSKSLIRIVMGTTLLTHAANLFLITMGGLKHGTVPIYEANVKSYVDPIPQALILTAIVIAFATTAFFLVLAFRTYKELGTDNVESMKGVPEDD.

The next 3 helical transmembrane spans lie at 1-21 (MEIIMIFVSGILTAISVYLVL), 28-48 (IVMGTTLLTHAANLFLITMGG), and 72-92 (LILTAIVIAFATTAFFLVLAF).

The protein belongs to the CPA3 antiporters (TC 2.A.63) subunit C family. In terms of assembly, may form a heterooligomeric complex that consists of seven subunits: mnhA1, mnhB1, mnhC1, mnhD1, mnhE1, mnhF1 and mnhG1.

Its subcellular location is the cell membrane. Mnh complex is a Na(+)/H(+) antiporter involved in Na(+) excretion. The chain is Na(+)/H(+) antiporter subunit C1 (mnhC1) from Staphylococcus aureus (strain JH1).